The following is a 311-amino-acid chain: Ornithine carbamoyltransferase (311 aa).

Carbamoyl phosphate is bound by residues S59–T62, Q86, R110, and H137–Q140. Residues N168, D228, and S232–M233 each bind L-ornithine. Residues C267–L268 and R295 each bind carbamoyl phosphate.

Belongs to the aspartate/ornithine carbamoyltransferase superfamily. OTCase family.

It is found in the cytoplasm. The enzyme catalyses carbamoyl phosphate + L-ornithine = L-citrulline + phosphate + H(+). The protein operates within amino-acid biosynthesis; L-arginine biosynthesis; L-arginine from L-ornithine and carbamoyl phosphate: step 1/3. Its function is as follows. Reversibly catalyzes the transfer of the carbamoyl group from carbamoyl phosphate (CP) to the N(epsilon) atom of ornithine (ORN) to produce L-citrulline. This chain is Ornithine carbamoyltransferase, found in Caulobacter vibrioides (strain ATCC 19089 / CIP 103742 / CB 15) (Caulobacter crescentus).